Here is a 569-residue protein sequence, read N- to C-terminus: Peroxynitrite isomerase THAP4 (569 aa).

The THAP-type zinc finger occupies 1–85; sequence MVICCAAVNC…LKPTAVPSIF (85 aa). The segment at 88–216 is disordered; it reads SEKKRGAGGH…DKSGISMDDF (129 aa). 2 stretches are compositionally biased toward polar residues: residues 121–130 and 157–167; these read IGSSLSSSDN and AVSQEQGQSLE. Serine 159 carries the post-translational modification Phosphoserine. An HCFC1-binding motif (HBM) motif is present at residues 230–233; that stretch reads LHSY. Serine 234 is subject to Phosphoserine. A disordered region spans residues 235 to 312; that stretch reads FSSKHTRERP…EAVQSEHSDA (78 aa). The span at 242 to 262 shows a compositional bias: basic and acidic residues; that stretch reads ERPSVPREPMDRKRLKREMEP. The segment covering 265–279 has biased composition (polar residues); the sequence is SGNSVAQSPPSSSLT. Residues 280-289 show a composition bias toward low complexity; it reads ATPQKASQSP. The interval 407 to 569 is nitrobindin; it reads PPKLNPVVEP…LHITYKKVTP (163 aa). The heme b site is built by threonine 436 and histidine 559.

It in the C-terminal section; belongs to the nitrobindin family. Homodimer. It depends on heme b as a cofactor.

The protein resides in the cytoplasm. Its subcellular location is the nucleus. The enzyme catalyses peroxynitrite = nitrate. The protein operates within nitrogen metabolism. Its function is as follows. Heme-binding protein able to scavenge peroxynitrite and to protect free L-tyrosine against peroxynitrite-mediated nitration, by acting as a peroxynitrite isomerase that converts peroxynitrite to nitrate. Therefore, this protein likely plays a role in peroxynitrite sensing and in the detoxification of reactive nitrogen and oxygen species (RNS and ROS, respectively). Is able to bind nitric oxide (NO) in vitro, but may act as a sensor of peroxynitrite levels in vivo, possibly modulating the transcriptional activity residing in the N-terminal region. The polypeptide is Peroxynitrite isomerase THAP4 (Mus musculus (Mouse)).